The primary structure comprises 542 residues: MEIDLMKHIQKTKFIFVTGGVYSSLGKGVSASSIGRILVELGYSVAMQKLDPYLNIDPTYLSPLQHGEVFVTKDGKEADLDLGTYERFINADLNKYASVTSGKIYYEILTKERENGFDGKTVQTIPHVTSAVIDYIKKIKDSLKTDFIIVEIGGTIGDIESLPFIEAISQFKTIYGVNNVMFIHCSPLIYIEKVGELKTKPTQHSVKTLRSLGINLDLLLLRTNQKLDEVTIKKLAWSCGLDIDMIFAAYDVESVYLLPNVLFEQGIHKTILDFFSLPLKNDNINSWIDFTDKITTFKKHNLVIGLVGKYVELPDAYKSVLASLELAAIELNIDLKIKYIQPQNLNENNINEELKKINGIVIPSIAGSIKGWPGALLAASYARKNNIPFLAVGTGVNIGIGEFINNVLKLPIEFINLGNGDFSFLKDAFVKNEIENYRIGEYCSNIQANTITSQIYLKQNQLNERHRHHFEFNNHYINNYFLNQNWKIGAISVDNNYIDVLEYTKNHFYVLTIFNPEYTSKPSKANPYFINLLKMSLKIKES.

Positions 1 to 277 (MEIDLMKHIQ…HKTILDFFSL (277 aa)) are amidoligase domain. Residue Ser-23 coordinates CTP. UTP is bound at residue Ser-23. ATP contacts are provided by residues 24 to 29 (SLGKGV) and Asp-81. Positions 81 and 151 each coordinate Mg(2+). CTP-binding positions include 158–160 (DIE), 198–203 (KTKPTQ), and Lys-234. Residues 198-203 (KTKPTQ) and Lys-234 contribute to the UTP site. In terms of domain architecture, Glutamine amidotransferase type-1 spans 310–542 (YVELPDAYKS…LKMSLKIKES (233 aa)). The active site involves Glu-517.

It belongs to the CTP synthase family. Homotetramer.

It carries out the reaction UTP + L-glutamine + ATP + H2O = CTP + L-glutamate + ADP + phosphate + 2 H(+). The catalysed reaction is L-glutamine + H2O = L-glutamate + NH4(+). It catalyses the reaction UTP + NH4(+) + ATP = CTP + ADP + phosphate + 2 H(+). The protein operates within pyrimidine metabolism; CTP biosynthesis via de novo pathway; CTP from UDP: step 2/2. Allosterically activated by GTP, when glutamine is the substrate; GTP has no effect on the reaction when ammonia is the substrate. The allosteric effector GTP functions by stabilizing the protein conformation that binds the tetrahedral intermediate(s) formed during glutamine hydrolysis. Inhibited by the product CTP, via allosteric rather than competitive inhibition. Its function is as follows. Catalyzes the ATP-dependent amination of UTP to CTP with either L-glutamine or ammonia as the source of nitrogen. Regulates intracellular CTP levels through interactions with the four ribonucleotide triphosphates. This chain is Putative CTP synthase, found in Ureaplasma parvum serovar 3 (strain ATCC 700970).